Consider the following 542-residue polypeptide: MTAFIFITGGVMSSVGKGIATASIAKILQARGLSVTAIKVDPYLNVDAGTMNPYQHGEVYVTADGGETDLDLGHYERFLDVELSKSHNITSGQVYLSVIDGERRGVYLGQTVQLIPHVTNEIKARIRAIAKEGWDAVVIEIGGTVGDYESLPFLEAARQMRLEENGNVVFVHVAPVPILDVTDEFKTKPLQHSVMELRRVGIQPDIIIIRSTRPITNDVKAKVSLFTNVPQNLIFNSFNVDTIYRVPLILDEQGLGRMLTELLKVKVNEPKWDDWVNLVNSMVNATDEVKVTLCGKYVKLRDAYISIVEAIRHAAAWLRVKPRIIWCDSEEVEKDPDLLPKMNTDAYIILPGFGARGVEGKIMAIRYARENNIPLLGICYGMQLSVVEYARDVLGLKDAHTTEVNPNTTHPVIDITPEEKSINKLGGTMILGDREISITEGSILHGIYGSLRIRERHRHRYEVNPAYFKQLQEAGLVFSAMRIDVPRVEAIELHNHYFFIATQFHPEFRSRLTRPHPLFTALLKAALARKMGLESPYTGVKP.

The interval 1-265 is amidoligase domain; sequence MTAFIFITGG…GRMLTELLKV (265 aa). S13 is a CTP binding site. Position 13 (S13) interacts with UTP. Residue 14 to 19 coordinates ATP; that stretch reads SVGKGI. Y54 serves as a coordination point for L-glutamine. Residue D71 coordinates ATP. 2 residues coordinate Mg(2+): D71 and E140. Residues 147–149, 186–191, and K222 contribute to the CTP site; these read DYE and KTKPLQ. UTP contacts are provided by residues 186–191 and K222; that span reads KTKPLQ. The 236-residue stretch at 297–532 folds into the Glutamine amidotransferase type-1 domain; sequence YVKLRDAYIS…LKAALARKMG (236 aa). G352 contacts L-glutamine. C379 functions as the Nucleophile; for glutamine hydrolysis in the catalytic mechanism. L-glutamine is bound by residues 380-383, E403, and R460; that span reads YGMQ. Residues H505 and E507 contribute to the active site.

This sequence belongs to the CTP synthase family. As to quaternary structure, homotetramer.

It catalyses the reaction UTP + L-glutamine + ATP + H2O = CTP + L-glutamate + ADP + phosphate + 2 H(+). The catalysed reaction is L-glutamine + H2O = L-glutamate + NH4(+). The enzyme catalyses UTP + NH4(+) + ATP = CTP + ADP + phosphate + 2 H(+). It functions in the pathway pyrimidine metabolism; CTP biosynthesis via de novo pathway; CTP from UDP: step 2/2. Allosterically activated by GTP, when glutamine is the substrate; GTP has no effect on the reaction when ammonia is the substrate. The allosteric effector GTP functions by stabilizing the protein conformation that binds the tetrahedral intermediate(s) formed during glutamine hydrolysis. Inhibited by the product CTP, via allosteric rather than competitive inhibition. Its function is as follows. Catalyzes the ATP-dependent amination of UTP to CTP with either L-glutamine or ammonia as the source of nitrogen. Regulates intracellular CTP levels through interactions with the four ribonucleotide triphosphates. This is CTP synthase from Caldivirga maquilingensis (strain ATCC 700844 / DSM 13496 / JCM 10307 / IC-167).